We begin with the raw amino-acid sequence, 394 residues long: Elongation factor Tu (394 aa).

One can recognise a tr-type G domain in the interval 10–204 (KPHVNVGTIG…ALDSYIPEPE (195 aa)). The interval 19 to 26 (GHVDHGKT) is G1. 19–26 (GHVDHGKT) is a binding site for GTP. Thr-26 contacts Mg(2+). The segment at 60-64 (GITIS) is G2. A G3 region spans residues 81–84 (DCPG). Residues 81–85 (DCPGH) and 136–139 (NKCD) contribute to the GTP site. The G4 stretch occupies residues 136-139 (NKCD). The interval 174 to 176 (SAL) is G5.

This sequence belongs to the TRAFAC class translation factor GTPase superfamily. Classic translation factor GTPase family. EF-Tu/EF-1A subfamily. In terms of assembly, monomer.

It is found in the cytoplasm. The enzyme catalyses GTP + H2O = GDP + phosphate + H(+). GTP hydrolase that promotes the GTP-dependent binding of aminoacyl-tRNA to the A-site of ribosomes during protein biosynthesis. The sequence is that of Elongation factor Tu from Alteromonas mediterranea (strain DSM 17117 / CIP 110805 / LMG 28347 / Deep ecotype).